The sequence spans 238 residues: Probable transcriptional regulatory protein VIBHAR_07036 (238 aa).

Belongs to the TACO1 family.

It localises to the cytoplasm. This is Probable transcriptional regulatory protein VIBHAR_07036 from Vibrio campbellii (strain ATCC BAA-1116).